The sequence spans 742 residues: Polyribonucleotide nucleotidyltransferase (742 aa).

Mg(2+)-binding residues include Asp515 and Asp521. In terms of domain architecture, KH spans 581-640; sequence PRIITITIPVDKIGEVIGPKGKIINQIQDDTGASISIEDDGTIYIGATNGEAAEAAKNAV. An S1 motif domain is found at 652–724; the sequence is GERYLGTVVK…DRGKLSLVPV (73 aa).

The protein belongs to the polyribonucleotide nucleotidyltransferase family. Mg(2+) is required as a cofactor.

Its subcellular location is the cytoplasm. It catalyses the reaction RNA(n+1) + phosphate = RNA(n) + a ribonucleoside 5'-diphosphate. Involved in mRNA degradation. Catalyzes the phosphorolysis of single-stranded polyribonucleotides processively in the 3'- to 5'-direction. This chain is Polyribonucleotide nucleotidyltransferase, found in Nocardioides sp. (strain ATCC BAA-499 / JS614).